Consider the following 111-residue polypeptide: Flagellar hook-basal body complex protein FliE (111 aa).

The protein belongs to the FliE family.

It is found in the bacterial flagellum basal body. The sequence is that of Flagellar hook-basal body complex protein FliE from Brucella ovis (strain ATCC 25840 / 63/290 / NCTC 10512).